The sequence spans 114 residues: Nucleoid-associated protein MAB_0319 (114 aa).

Belongs to the YbaB/EbfC family. In terms of assembly, homodimer.

It is found in the cytoplasm. The protein resides in the nucleoid. Binds to DNA and alters its conformation. May be involved in regulation of gene expression, nucleoid organization and DNA protection. The protein is Nucleoid-associated protein MAB_0319 of Mycobacteroides abscessus (strain ATCC 19977 / DSM 44196 / CCUG 20993 / CIP 104536 / JCM 13569 / NCTC 13031 / TMC 1543 / L948) (Mycobacterium abscessus).